A 476-amino-acid chain; its full sequence is Glutamate--tRNA ligase (476 aa).

The short motif at 9-19 (PSPTGTLHIGT) is the 'HIGH' region element. The 'KMSKS' region motif lies at 248 to 252 (KLSKR). Lysine 251 is a binding site for ATP.

This sequence belongs to the class-I aminoacyl-tRNA synthetase family. Glutamate--tRNA ligase type 1 subfamily. As to quaternary structure, monomer.

It localises to the cytoplasm. The enzyme catalyses tRNA(Glu) + L-glutamate + ATP = L-glutamyl-tRNA(Glu) + AMP + diphosphate. Catalyzes the attachment of glutamate to tRNA(Glu) in a two-step reaction: glutamate is first activated by ATP to form Glu-AMP and then transferred to the acceptor end of tRNA(Glu). The polypeptide is Glutamate--tRNA ligase (Prochlorococcus marinus (strain MIT 9313)).